A 188-amino-acid polypeptide reads, in one-letter code: Protein GrpE (188 aa).

Positions 1–30 are disordered; that stretch reads MTKKTSHHKAEQKEKRAGEESGRESEVLDH. Residues 8-30 are compositionally biased toward basic and acidic residues; sequence HKAEQKEKRAGEESGRESEVLDH.

Belongs to the GrpE family. In terms of assembly, homodimer.

The protein resides in the cytoplasm. In terms of biological role, participates actively in the response to hyperosmotic and heat shock by preventing the aggregation of stress-denatured proteins, in association with DnaK and GrpE. It is the nucleotide exchange factor for DnaK and may function as a thermosensor. Unfolded proteins bind initially to DnaJ; upon interaction with the DnaJ-bound protein, DnaK hydrolyzes its bound ATP, resulting in the formation of a stable complex. GrpE releases ADP from DnaK; ATP binding to DnaK triggers the release of the substrate protein, thus completing the reaction cycle. Several rounds of ATP-dependent interactions between DnaJ, DnaK and GrpE are required for fully efficient folding. This is Protein GrpE from Chlorobium phaeobacteroides (strain BS1).